The primary structure comprises 135 residues: MKLSCLSLALAIILLLAIVHSPNMEVKALAGPEADAIGFADAFGEADAFGEADAFGEADAFGEADAFGEADAKRSKSSSKTKPKKPKKPKKKIKIPDWVKSGGKMVGEAVAGAVADAAVSAVMDAAVGTTAEPEQ.

A signal peptide spans 1–21; sequence MKLSCLSLALAIILLLAIVHS. Positions 22–72 are excised as a propeptide; sequence PNMEVKALAGPEADAIGFADAFGEADAFGEADAFGEADAFGEADAFGEADA. Residues 69-95 are disordered; that stretch reads EADAKRSKSSSKTKPKKPKKPKKKIKI. Basic residues predominate over residues 75–93; the sequence is SKSSSKTKPKKPKKPKKKI. The O-linked (GalNAc...) serine glycan is linked to serine 120. Threonine 129 and threonine 130 each carry an O-linked (GalNAc...) threonine glycan.

This sequence belongs to the formicidae venom precursor-01 superfamily. In terms of processing, glycosylation is critical to maintaining the aqueous solubility of this protein, but does not directly contribute to its activity. In terms of tissue distribution, expressed by the venom gland.

The protein resides in the secreted. It localises to the target cell membrane. Neurotoxin that triggers pain behavior and inflammation in mammals, and is paralytic and lethal to insects. Causes a time-dependent increase in cell leak current. May act by targeting membranes. This chain is U-myrmeciitoxin(01)-Mg7a, found in Myrmecia gulosa (Red bulldog ant).